The chain runs to 635 residues: Threonine--tRNA ligase (635 aa).

Positions 1–61 (MINISLSDGS…ENNCKLRILT (61 aa)) constitute a TGS domain. The tract at residues 242–533 (DHRKLGRELD…LIEEYAGCFP (292 aa)) is catalytic. 3 residues coordinate Zn(2+): cysteine 333, histidine 384, and histidine 510.

The protein belongs to the class-II aminoacyl-tRNA synthetase family. Homodimer. Zn(2+) serves as cofactor.

The protein resides in the cytoplasm. It catalyses the reaction tRNA(Thr) + L-threonine + ATP = L-threonyl-tRNA(Thr) + AMP + diphosphate + H(+). Functionally, catalyzes the attachment of threonine to tRNA(Thr) in a two-step reaction: L-threonine is first activated by ATP to form Thr-AMP and then transferred to the acceptor end of tRNA(Thr). Also edits incorrectly charged L-seryl-tRNA(Thr). This chain is Threonine--tRNA ligase, found in Rickettsia canadensis (strain McKiel).